A 285-amino-acid polypeptide reads, in one-letter code: Tetraspanin-3 (285 aa).

Topologically, residues 1 to 6 (MRTSNH) are cytoplasmic. A helical transmembrane segment spans residues 7–27 (LIGLVNFLTFLLSIPILGGGI). At 28–43 (WLSSRANSTDCLRFLQ) the chain is on the extracellular side. Asn34 carries an N-linked (GlcNAc...) asparagine glycan. A helical transmembrane segment spans residues 44–64 (WPLIVIGISIMVVSLAGFAGA). Residues 65-71 (CYRNKFL) lie on the Cytoplasmic side of the membrane. Residues 72–92 (MWLYLVVMLLIIAALIGFIIF) traverse the membrane as a helical segment. Residues 93-235 (AYAVTDKGSG…LGSLKKSWRK (143 aa)) lie on the Extracellular side of the membrane. The N-linked (GlcNAc...) asparagine glycan is linked to Asn187. Residues 236–256 (VSVINIVVLIILVIFYVIAYA) form a helical membrane-spanning segment. Topologically, residues 257-285 (AYRNVKRIDNDEPAGEARMTKSHPSHFHL) are cytoplasmic.

The protein belongs to the tetraspanin (TM4SF) family.

It localises to the cell membrane. May be involved in the regulation of cell differentiation. The sequence is that of Tetraspanin-3 (TET3) from Arabidopsis thaliana (Mouse-ear cress).